The primary structure comprises 58 residues: Small ribosomal subunit protein bS21 (58 aa).

A disordered region spans residues 36–58; sequence EHYEKPSVKRKKKSEAARRRKYR. Residues 43–58 are compositionally biased toward basic residues; sequence VKRKKKSEAARRRKYR.

The protein belongs to the bacterial ribosomal protein bS21 family.

In Symbiobacterium thermophilum (strain DSM 24528 / JCM 14929 / IAM 14863 / T), this protein is Small ribosomal subunit protein bS21.